A 277-amino-acid chain; its full sequence is Xyloglucan endotransglucosylase/hydrolase protein 19 (277 aa).

A signal peptide spans 1 to 21 (MKSFTFLILFLFAAQSISVYA). A GH16 domain is found at 22-213 (GSFHKDVKIH…WSKAPFTAYY (192 aa)). The active-site Nucleophile is Glu99. Glu103 acts as the Proton donor in catalysis. Glu103 lines the xyloglucan pocket. Residue Asn107 is glycosylated (N-linked (GlcNAc...) asparagine). Residues 116–118 (HTN), 126–128 (DKE), 192–193 (HW), and Gly197 contribute to the xyloglucan site. Disulfide bonds link Cys221–Cys230 and Cys262–Cys276. Arg267 provides a ligand contact to xyloglucan.

The protein belongs to the glycosyl hydrolase 16 family. XTH group 2 subfamily. Post-translationally, contains at least one intrachain disulfide bond essential for its enzymatic activity. Root specific.

The protein resides in the secreted. Its subcellular location is the cell wall. It is found in the extracellular space. It localises to the apoplast. The catalysed reaction is breaks a beta-(1-&gt;4) bond in the backbone of a xyloglucan and transfers the xyloglucanyl segment on to O-4 of the non-reducing terminal glucose residue of an acceptor, which can be a xyloglucan or an oligosaccharide of xyloglucan.. Its function is as follows. Possesses xyloglucan endotransglucosylase (XET) activity in vitro. Does not possess xyloglucan endohydrolysis (XEH) activity. Cleaves and religates xyloglucan polymers, an essential constituent of the primary cell wall, and thereby participates in cell wall construction of growing tissues. Involved in cell proliferation in the tissue reunion process of wounded inflorescence stems. Maybe a downstream target of NAC071 as a consequence of auxin action in wounded stems. This Arabidopsis thaliana (Mouse-ear cress) protein is Xyloglucan endotransglucosylase/hydrolase protein 19.